The primary structure comprises 356 residues: tRNA N6-adenosine threonylcarbamoyltransferase (356 aa).

A divalent metal cation-binding residues include His-122, His-126, and Tyr-143. Residues 143–147 (YVSGG), Asp-175, Gly-190, Glu-194, and Asn-287 contribute to the substrate site. An a divalent metal cation-binding site is contributed by Asp-315.

It belongs to the KAE1 / TsaD family. In terms of assembly, component of the EKC/KEOPS complex composed of at least BUD32, CGI121, GON7, KAE1 and PCC1; the whole complex dimerizes. Requires a divalent metal cation as cofactor.

The protein localises to the cytoplasm. It is found in the nucleus. It catalyses the reaction L-threonylcarbamoyladenylate + adenosine(37) in tRNA = N(6)-L-threonylcarbamoyladenosine(37) in tRNA + AMP + H(+). Component of the EKC/KEOPS complex that is required for the formation of a threonylcarbamoyl group on adenosine at position 37 (t(6)A37) in tRNAs that read codons beginning with adenine. The complex is probably involved in the transfer of the threonylcarbamoyl moiety of threonylcarbamoyl-AMP (TC-AMP) to the N6 group of A37. KAE1 likely plays a direct catalytic role in this reaction, but requires other protein(s) of the complex to fulfill this activity. The EKC/KEOPS complex also promotes both telomere uncapping and telomere elongation. The complex is required for efficient recruitment of transcriptional coactivators. The chain is tRNA N6-adenosine threonylcarbamoyltransferase from Chaetomium globosum (strain ATCC 6205 / CBS 148.51 / DSM 1962 / NBRC 6347 / NRRL 1970) (Soil fungus).